The following is a 1578-amino-acid chain: Pentafunctional AROM polypeptide (1578 aa).

Residues methionine 1–aspartate 393 are 3-dehydroquinate synthase. NAD(+)-binding positions include aspartate 44 to asparagine 46, glutamate 79 to lysine 82, glycine 110 to valine 112, and aspartate 115. Residue arginine 126 coordinates 7-phospho-2-dehydro-3-deoxy-D-arabino-heptonate. NAD(+) is bound at residue threonine 135–serine 136. Residues aspartate 142 and lysine 148 each contribute to the 7-phospho-2-dehydro-3-deoxy-D-arabino-heptonate site. Residue lysine 157 participates in NAD(+) binding. Position 158 (asparagine 158) interacts with 7-phospho-2-dehydro-3-deoxy-D-arabino-heptonate. Residues tryptophan 175–threonine 178 and asparagine 186 contribute to the NAD(+) site. Position 190 (glutamate 190) interacts with Zn(2+). 7-phospho-2-dehydro-3-deoxy-D-arabino-heptonate contacts are provided by residues glutamate 190–lysine 193 and lysine 259. Glutamate 269 (proton acceptor; for 3-dehydroquinate synthase activity) is an active-site residue. 7-phospho-2-dehydro-3-deoxy-D-arabino-heptonate contacts are provided by residues arginine 273 to asparagine 277 and histidine 280. Histidine 280 is a binding site for Zn(2+). The Proton acceptor; for 3-dehydroquinate synthase activity role is filled by histidine 284. Positions 296 and 365 each coordinate 7-phospho-2-dehydro-3-deoxy-D-arabino-heptonate. Histidine 296 serves as a coordination point for Zn(2+). The interval valine 406–alanine 863 is EPSP synthase. Cysteine 845 serves as the catalytic For EPSP synthase activity. The shikimate kinase stretch occupies residues valine 882–cysteine 1071. Residue glycine 886–serine 893 coordinates ATP. The tract at residues leucine 1072–glutamate 1284 is 3-dehydroquinase. The active-site Proton acceptor; for 3-dehydroquinate dehydratase activity is the histidine 1189. Residue lysine 1218 is the Schiff-base intermediate with substrate; for 3-dehydroquinate dehydratase activity of the active site. The interval alanine 1297–glutamate 1578 is shikimate dehydrogenase.

This sequence in the N-terminal section; belongs to the sugar phosphate cyclases superfamily. Dehydroquinate synthase family. In the 2nd section; belongs to the EPSP synthase family. It in the 3rd section; belongs to the shikimate kinase family. The protein in the 4th section; belongs to the type-I 3-dehydroquinase family. This sequence in the C-terminal section; belongs to the shikimate dehydrogenase family. In terms of assembly, homodimer. Zn(2+) is required as a cofactor.

The protein resides in the cytoplasm. It carries out the reaction 7-phospho-2-dehydro-3-deoxy-D-arabino-heptonate = 3-dehydroquinate + phosphate. It catalyses the reaction 3-dehydroquinate = 3-dehydroshikimate + H2O. The catalysed reaction is shikimate + NADP(+) = 3-dehydroshikimate + NADPH + H(+). The enzyme catalyses shikimate + ATP = 3-phosphoshikimate + ADP + H(+). It carries out the reaction 3-phosphoshikimate + phosphoenolpyruvate = 5-O-(1-carboxyvinyl)-3-phosphoshikimate + phosphate. Its pathway is metabolic intermediate biosynthesis; chorismate biosynthesis; chorismate from D-erythrose 4-phosphate and phosphoenolpyruvate: step 2/7. It participates in metabolic intermediate biosynthesis; chorismate biosynthesis; chorismate from D-erythrose 4-phosphate and phosphoenolpyruvate: step 3/7. It functions in the pathway metabolic intermediate biosynthesis; chorismate biosynthesis; chorismate from D-erythrose 4-phosphate and phosphoenolpyruvate: step 4/7. The protein operates within metabolic intermediate biosynthesis; chorismate biosynthesis; chorismate from D-erythrose 4-phosphate and phosphoenolpyruvate: step 5/7. Its pathway is metabolic intermediate biosynthesis; chorismate biosynthesis; chorismate from D-erythrose 4-phosphate and phosphoenolpyruvate: step 6/7. Its function is as follows. The AROM polypeptide catalyzes 5 consecutive enzymatic reactions in prechorismate polyaromatic amino acid biosynthesis. This Kluyveromyces lactis (strain ATCC 8585 / CBS 2359 / DSM 70799 / NBRC 1267 / NRRL Y-1140 / WM37) (Yeast) protein is Pentafunctional AROM polypeptide.